We begin with the raw amino-acid sequence, 513 residues long: ATP synthase subunit alpha (513 aa).

ATP is bound at residue 170-177 (GDRQTGKT).

It belongs to the ATPase alpha/beta chains family. F-type ATPases have 2 components, CF(1) - the catalytic core - and CF(0) - the membrane proton channel. CF(1) has five subunits: alpha(3), beta(3), gamma(1), delta(1), epsilon(1). CF(0) has three main subunits: a(1), b(2) and c(9-12). The alpha and beta chains form an alternating ring which encloses part of the gamma chain. CF(1) is attached to CF(0) by a central stalk formed by the gamma and epsilon chains, while a peripheral stalk is formed by the delta and b chains.

The protein localises to the cell inner membrane. The enzyme catalyses ATP + H2O + 4 H(+)(in) = ADP + phosphate + 5 H(+)(out). Functionally, produces ATP from ADP in the presence of a proton gradient across the membrane. The alpha chain is a regulatory subunit. This chain is ATP synthase subunit alpha, found in Teredinibacter turnerae (strain ATCC 39867 / T7901).